The following is a 372-amino-acid chain: UDP-N-acetylglucosamine--N-acetylmuramyl-(pentapeptide) pyrophosphoryl-undecaprenol N-acetylglucosamine transferase (372 aa).

Residues 11–13 (TAG), N123, R160, S200, and Q298 each bind UDP-N-acetyl-alpha-D-glucosamine.

This sequence belongs to the glycosyltransferase 28 family. MurG subfamily.

Its subcellular location is the cell membrane. The catalysed reaction is di-trans,octa-cis-undecaprenyl diphospho-N-acetyl-alpha-D-muramoyl-L-alanyl-D-glutamyl-meso-2,6-diaminopimeloyl-D-alanyl-D-alanine + UDP-N-acetyl-alpha-D-glucosamine = di-trans,octa-cis-undecaprenyl diphospho-[N-acetyl-alpha-D-glucosaminyl-(1-&gt;4)]-N-acetyl-alpha-D-muramoyl-L-alanyl-D-glutamyl-meso-2,6-diaminopimeloyl-D-alanyl-D-alanine + UDP + H(+). It participates in cell wall biogenesis; peptidoglycan biosynthesis. In terms of biological role, cell wall formation. Catalyzes the transfer of a GlcNAc subunit on undecaprenyl-pyrophosphoryl-MurNAc-pentapeptide (lipid intermediate I) to form undecaprenyl-pyrophosphoryl-MurNAc-(pentapeptide)GlcNAc (lipid intermediate II). This Cutibacterium acnes (strain DSM 16379 / KPA171202) (Propionibacterium acnes) protein is UDP-N-acetylglucosamine--N-acetylmuramyl-(pentapeptide) pyrophosphoryl-undecaprenol N-acetylglucosamine transferase.